We begin with the raw amino-acid sequence, 620 residues long: Chaperone protein HscA homolog (620 aa).

It belongs to the heat shock protein 70 family.

Functionally, chaperone involved in the maturation of iron-sulfur cluster-containing proteins. Has a low intrinsic ATPase activity which is markedly stimulated by HscB. This chain is Chaperone protein HscA homolog, found in Paracidovorax citrulli (strain AAC00-1) (Acidovorax citrulli).